A 352-amino-acid chain; its full sequence is Isopentenyl-diphosphate delta-isomerase (352 aa).

Residue 6 to 7 (RK) coordinates substrate. Residues 63 to 65 (AMT), Ser93, and Asn122 contribute to the FMN site. Residue 93–95 (SQR) participates in substrate binding. Position 160 (Gln160) interacts with substrate. Mg(2+) is bound at residue Glu161. FMN-binding positions include Lys192, Thr221, 271–273 (GIR), and 292–293 (SQ).

The protein belongs to the IPP isomerase type 2 family. As to quaternary structure, homooctamer. Dimer of tetramers. FMN serves as cofactor. It depends on NADPH as a cofactor. The cofactor is Mg(2+).

It localises to the cytoplasm. It catalyses the reaction isopentenyl diphosphate = dimethylallyl diphosphate. Involved in the biosynthesis of isoprenoids. Catalyzes the 1,3-allylic rearrangement of the homoallylic substrate isopentenyl (IPP) to its allylic isomer, dimethylallyl diphosphate (DMAPP). The protein is Isopentenyl-diphosphate delta-isomerase of Pyrobaculum arsenaticum (strain DSM 13514 / JCM 11321 / PZ6).